The chain runs to 115 residues: MNFVLALTVNTLLALLLMTITFWLPQLYPYMEKSDPYECGFDPAYPARIPFSMKFFLVAITFLLFDLEIALLLPLPWALQTTNLPLMTTSSLMLIIILALGLTYEWSQKGLDWAE.

3 consecutive transmembrane segments (helical) span residues 3–23, 55–75, and 84–104; these read FVLALTVNTLLALLLMTITFW, FFLVAITFLLFDLEIALLLPL, and LPLMTTSSLMLIIILALGLTY.

This sequence belongs to the complex I subunit 3 family. Core subunit of respiratory chain NADH dehydrogenase (Complex I) which is composed of 45 different subunits. Interacts with TMEM186. Interacts with TMEM242.

The protein localises to the mitochondrion inner membrane. It carries out the reaction a ubiquinone + NADH + 5 H(+)(in) = a ubiquinol + NAD(+) + 4 H(+)(out). Core subunit of the mitochondrial membrane respiratory chain NADH dehydrogenase (Complex I) which catalyzes electron transfer from NADH through the respiratory chain, using ubiquinone as an electron acceptor. Essential for the catalytic activity of complex I. The chain is NADH-ubiquinone oxidoreductase chain 3 from Pongo abelii (Sumatran orangutan).